The following is a 494-amino-acid chain: Nitrogenase molybdenum-iron protein alpha chain (494 aa).

The [8Fe-7S] cluster site is built by Cys-70, Cys-96, and Cys-162. [7Fe-Mo-9S-C-homocitryl] cluster contacts are provided by Cys-288 and His-455.

This sequence belongs to the NifD/NifK/NifE/NifN family. As to quaternary structure, tetramer of two alpha and two beta chains. Forms complex with the iron protein (nitrogenase component 2). [8Fe-7S] cluster is required as a cofactor. [7Fe-Mo-9S-C-homocitryl] cluster serves as cofactor.

The catalysed reaction is N2 + 8 reduced [2Fe-2S]-[ferredoxin] + 16 ATP + 16 H2O = H2 + 8 oxidized [2Fe-2S]-[ferredoxin] + 2 NH4(+) + 16 ADP + 16 phosphate + 6 H(+). Functionally, this molybdenum-iron protein is part of the nitrogenase complex that catalyzes the key enzymatic reactions in nitrogen fixation. The protein is Nitrogenase molybdenum-iron protein alpha chain (nifD) of Leptolyngbya boryana (Plectonema boryanum).